Reading from the N-terminus, the 307-residue chain is Ribonuclease Z (307 aa).

Zn(2+)-binding residues include His63, His65, Asp67, His68, His143, Asp213, and His271. Asp67 (proton acceptor) is an active-site residue.

This sequence belongs to the RNase Z family. Homodimer. It depends on Zn(2+) as a cofactor.

It carries out the reaction Endonucleolytic cleavage of RNA, removing extra 3' nucleotides from tRNA precursor, generating 3' termini of tRNAs. A 3'-hydroxy group is left at the tRNA terminus and a 5'-phosphoryl group is left at the trailer molecule.. Functionally, zinc phosphodiesterase, which displays some tRNA 3'-processing endonuclease activity. Probably involved in tRNA maturation, by removing a 3'-trailer from precursor tRNA. The polypeptide is Ribonuclease Z (Lactococcus lactis subsp. cremoris (strain SK11)).